The primary structure comprises 350 residues: Guanine nucleotide-binding protein G(t) subunit alpha-1 (350 aa).

The tract at residues 1 to 21 is disordered; that stretch reads MGAGASAEEKHSRELEKKLKE. The N-myristoyl glycine moiety is linked to residue Gly2. Residues 7–21 show a composition bias toward basic and acidic residues; that stretch reads AEEKHSRELEKKLKE. Residues 28–350 form the G-alpha domain; that stretch reads RTVKLLLLGA…KENLKDCGLF (323 aa). The tract at residues 31–44 is G1 motif; the sequence is KLLLLGAGESGKST. 36 to 43 contacts GTP; that stretch reads GAGESGKS. Ser43 lines the Mg(2+) pocket. A Phosphotyrosine; by SRC modification is found at Tyr142. GTP-binding positions include Asp146, 171–177, Gly199, 265–268, and Ala322; these read LRSRVKT and NKKD. Residues 169-177 are G2 motif; sequence DVLRSRVKT. Arg174 is modified (ADP-ribosylarginine; by cholera toxin). Thr177 contributes to the Mg(2+) binding site. The G3 motif stretch occupies residues 192–201; sequence FRMFDVGGQR. Positions 261–268 are G4 motif; that stretch reads VLFLNKKD. The segment at 320–325 is G5 motif; sequence TCATDT. The interval 340–350 is interaction with RHO; it reads IKENLKDCGLF. Cys347 is modified (ADP-ribosylcysteine; by pertussis toxin).

Belongs to the G-alpha family. G(i/o/t/z) subfamily. Heterotrimeric G proteins are composed of 3 subunits alpha, beta and gamma. The alpha chain contains the guanine nucleotide binding site. Interacts with RHO. Interacts with RGS9 and PDE6G. Interacts (when myristoylated) with UNC119; interaction is required for localization in sensory neurons. Rod photoreceptor cells. Predominantly expressed in the retina followed by the ciliary body, iris and retinal pigment epithelium.

The protein localises to the cell projection. It localises to the cilium. It is found in the photoreceptor outer segment. The protein resides in the membrane. Its subcellular location is the photoreceptor inner segment. Functions as a signal transducer for the rod photoreceptor RHO. Required for normal RHO-mediated light perception by the retina. Guanine nucleotide-binding proteins (G proteins) function as transducers downstream of G protein-coupled receptors (GPCRs), such as the photoreceptor RHO. The alpha chain contains the guanine nucleotide binding site and alternates between an active, GTP-bound state and an inactive, GDP-bound state. Activated RHO promotes GDP release and GTP binding. Signaling is mediated via downstream effector proteins, such as cGMP-phosphodiesterase. In Homo sapiens (Human), this protein is Guanine nucleotide-binding protein G(t) subunit alpha-1 (GNAT1).